Reading from the N-terminus, the 392-residue chain is Protein RecA (392 aa).

Residues 1–21 (MALETKPAQDPATEIKHELDP) form a disordered region. 83-90 (GPESSGKT) is a binding site for ATP. The disordered stretch occupies residues 372–392 (DAAKDTKATAAPAAKSSRAKA). Residues 379 to 392 (ATAAPAAKSSRAKA) are compositionally biased toward low complexity.

The protein belongs to the RecA family.

It localises to the cytoplasm. Functionally, can catalyze the hydrolysis of ATP in the presence of single-stranded DNA, the ATP-dependent uptake of single-stranded DNA by duplex DNA, and the ATP-dependent hybridization of homologous single-stranded DNAs. It interacts with LexA causing its activation and leading to its autocatalytic cleavage. This is Protein RecA from Bifidobacterium breve.